We begin with the raw amino-acid sequence, 365 residues long: Outer membrane protein assembly factor BamC (365 aa).

Residues 1–16 (MLKKVTPLFLVAAVAA) form the signal peptide. Cys17 carries the N-palmitoyl cysteine lipid modification. The S-diacylglycerol cysteine moiety is linked to residue Cys17.

Belongs to the BamC family. In terms of assembly, part of the Bam complex.

Its subcellular location is the cell outer membrane. Functionally, part of the outer membrane protein assembly complex, which is involved in assembly and insertion of beta-barrel proteins into the outer membrane. This chain is Outer membrane protein assembly factor BamC, found in Shewanella oneidensis (strain ATCC 700550 / JCM 31522 / CIP 106686 / LMG 19005 / NCIMB 14063 / MR-1).